The primary structure comprises 229 residues: Protein FMP52-2, mitochondrial (229 aa).

Residues 1-45 constitute a mitochondrion transit peptide; sequence MAAGAFILGSTGLCGYQMLRFAEKSSLFDKISTVGRKLPDFKSEK.

The protein belongs to the FMP52 family.

It is found in the mitochondrion outer membrane. The sequence is that of Protein FMP52-2, mitochondrial (FMP522) from Scheffersomyces stipitis (strain ATCC 58785 / CBS 6054 / NBRC 10063 / NRRL Y-11545) (Yeast).